Here is a 328-residue protein sequence, read N- to C-terminus: MENHSKQTEAPHPGTYMPAGYPPPYPPAAFQGPSDHAAYPIPQAGYQGPPGPYPGPQPGYPVPPGGYAGGGPSGFPVQNQPAYNHPGGPGGTPWMPAPPPPLNCPPGLEYLAQIDQLLVHQQIELLEVLTGFETNNKYEIKNSLGQRVYFAVEDTDCCTRNCCGASRPFTLRILDNLGREVMTLERPLRCSSCCFPCCLQEIEIQAPPGVPVGYVTQTWHPCLPKFTLQNEKKQDVLKVVGPCVVCSCCSDIDFELKSLDEESVVGKISKQWSGFVREAFTDADNFGIQFPLDLDVKMKAVMLGACFLIDFMFFERTGNEEQRSGAWQ.

Residues 1–93 form a proline-rich domain (PRD) region; it reads MENHSKQTEA…NHPGGPGGTP (93 aa). Residues 1-96 form a disordered region; sequence MENHSKQTEA…GGPGGTPWMP (96 aa). The Cytoplasmic segment spans residues 1 to 297; sequence MENHSKQTEA…IQFPLDLDVK (297 aa). The short motif at 18–26 is the SH3-binding 1 element; the sequence is PAGYPPPYP. A PPxY motif motif is present at residues 22 to 25; it reads PPPY. Low complexity predominate over residues 28 to 47; the sequence is AAFQGPSDHAAYPIPQAGYQ. Over residues 49–64 the composition is skewed to pro residues; sequence PPGPYPGPQPGYPVPP. An SH3-binding 2 motif is present at residues 56 to 64; the sequence is PQPGYPVPP. Residue Y83 is modified to Phosphotyrosine; by ABL. An SH3-binding 3 motif is present at residues 93 to 101; that stretch reads PWMPAPPPP. Position 170 is a phosphothreonine; by PKC/PRKCD (T170). Residues C193, C194, C197, and C198 are each lipidated (S-palmitoyl cysteine). The short motif at 269–275 is the Nuclear localization signal element; sequence SKQWSGF. The helical transmembrane segment at 298–314 threads the bilayer; the sequence is MKAVMLGACFLIDFMFF. Residues 315–328 lie on the Extracellular side of the membrane; sequence ERTGNEEQRSGAWQ.

The protein belongs to the phospholipid scramblase family. As to quaternary structure, forms homooligomers in the presence of calcium. Interacts with ABL. Interacts with RELT, RELL1 and RELL2. Interacts with OXSR1 in the presence of RELT. Interacts with OCLN, TOP2A and TOP2B. Interacts with TRPC1, TRPC4 and TRPC5. Interacts with ILDR1. It depends on Ca(2+) as a cofactor. Mg(2+) is required as a cofactor. Zn(2+) serves as cofactor. Post-translationally, phosphorylation at Thr-170 by PKC/PKCD increases its phospholipid scramblase activity during both cell stimulation and apoptosis. Phosphorylated by OXSR1 in the presence of RELT. In terms of processing, palmitoylation is required for its phospholipid scramblase activity. Palmitoylation regulates its localization to the cell membrane or the nucleus; trafficking to the cell membrane is dependent upon palmitoylation whereas in the absence of palmitoylation, localizes to the nucleus. As to expression, highly expressed in kidney, lung, liver and bone marrow, slightly in spleen, heart and macrophage.

It localises to the cell membrane. Its subcellular location is the nucleus. The protein localises to the cytoplasm. It is found in the perinuclear region. It carries out the reaction a 1,2-diacyl-sn-glycero-3-phosphocholine(in) = a 1,2-diacyl-sn-glycero-3-phosphocholine(out). The enzyme catalyses a 1,2-diacyl-sn-glycero-3-phosphoethanolamine(in) = a 1,2-diacyl-sn-glycero-3-phosphoethanolamine(out). It catalyses the reaction a 1,2-diacyl-sn-glycero-3-phospho-L-serine(in) = a 1,2-diacyl-sn-glycero-3-phospho-L-serine(out). Functionally, catalyzes calcium-induced ATP-independent rapid bidirectional and non-specific distribution of phospholipids (lipid scrambling or lipid flip-flop) between the inner and outer leaflet of the plasma membrane resulting in collapse of the phospholipid asymmetry which leads to phosphatidylserine externalization on the cell surface. Mediates calcium-dependent phosphatidylserine externalization and apoptosis in neurons via its association with TRPC5. Also exhibits magnesium-dependent nuclease activity against double-stranded DNA and RNA but not single-stranded DNA and can enhance DNA decatenation mediated by TOP2A. Negatively regulates FcR-mediated phagocytosis in differentiated macrophages. May contribute to cytokine-regulated cell proliferation and differentiation. This chain is Phospholipid scramblase 1 (Plscr1), found in Mus musculus (Mouse).